Consider the following 429-residue polypeptide: MKFVLETVSKCSGRLGSLSGVDRLASSAKFQTPTLVLHTKGGSVPHLSKEVLHYLTGAEPQLMQYSLNGTVHMEEAVRGCGDGLSGFVAQKESVSLLVLRDPAEPCQPGYHEKDVVPVFGRSGRKNFTAESYMSLVEAFRPDVYVPLFDGDTDGGSSKKREQRSQERTETFVEQCLEVHRKSEKLKGASVLGPIVGGYNKKLREKSVQFVERLKDDFAGYFIAGLHSYGSSASEVKEAPLLDIVSSVCQQLPLEKPKFLFGAFTPQLVLELVVRGVDIFDTSYPYLKTQQNRALNFSFDTSDSNVVARKNELDLTDACWAEDFTGFVDGCQCLACTKHTKAYTHHLYNTREMLAPILLMIHNLHHYFEFFKAIRRHVAQDTVGELIAHINKHVVLPVTDGVVKEPGKSLDGVELKESASVQVEAKRVKV.

Zn(2+) contacts are provided by Cys-330, Cys-332, Cys-335, and His-361.

This sequence belongs to the queuine tRNA-ribosyltransferase family. QTRT2 subfamily. As to quaternary structure, heterodimer of a catalytic subunit and an accessory subunit. It depends on Zn(2+) as a cofactor.

The protein localises to the cytoplasm. Non-catalytic subunit of the queuine tRNA-ribosyltransferase (TGT) that catalyzes the base-exchange of a guanine (G) residue with queuine (Q) at position 34 (anticodon wobble position) in tRNAs with GU(N) anticodons (tRNA-Asp, -Asn, -His and -Tyr), resulting in the hypermodified nucleoside queuosine (7-(((4,5-cis-dihydroxy-2-cyclopenten-1-yl)amino)methyl)-7-deazaguanosine). This is Queuine tRNA-ribosyltransferase accessory subunit 2 from Culex quinquefasciatus (Southern house mosquito).